The primary structure comprises 148 residues: uncharacterized protein (148 aa).

The segment covering 1-17 (MCPPVRQRPAQAPPAKR) has biased composition (low complexity). Disordered regions lie at residues 1–86 (MCPP…VQSP) and 122–148 (RAHR…TSPC). Over residues 38-57 (RPPKMQRRPRPPVAKRRRFP) the composition is skewed to basic residues. Positions 134–148 (QSRQRPSPDSQTSPC) are enriched in polar residues.

It belongs to the Epstein-Barr virus BLLF2 family.

This is an uncharacterized protein from Homo sapiens (Human).